A 479-amino-acid chain; its full sequence is D-aminoacyl-tRNA deacylase (479 aa).

The protein belongs to the DtdA deacylase family. As to quaternary structure, monomer. It depends on Zn(2+) as a cofactor.

The catalysed reaction is a D-aminoacyl-tRNA + H2O = a tRNA + a D-alpha-amino acid + H(+). The enzyme catalyses glycyl-tRNA(Ala) + H2O = tRNA(Ala) + glycine + H(+). Functionally, D-aminoacyl-tRNA deacylase with broad substrate specificity. By recycling D-aminoacyl-tRNA to D-amino acids and free tRNA molecules, this enzyme counteracts the toxicity associated with the formation of D-aminoacyl-tRNA entities in vivo. The chain is D-aminoacyl-tRNA deacylase from Methanococcoides burtonii (strain DSM 6242 / NBRC 107633 / OCM 468 / ACE-M).